We begin with the raw amino-acid sequence, 136 residues long: C-type natriuretic peptide prohormone (136 aa).

A signal peptide spans 1 to 21 (MSGQTSFYCGLLLVLLIQAQA). A disulfide bond links cysteine 120 and cysteine 136.

Belongs to the natriuretic peptide family. In terms of tissue distribution, CNP-115 is differentially processed to produce CNP-38 and CNP-39 in the heart and CNP-22 in the brain.

Its subcellular location is the secreted. Functionally, hormone which may be vasoactive and natriuretic. Has a cGMP-stimulating activity. In Triakis scyllium (Banded houndshark), this protein is C-type natriuretic peptide prohormone.